Consider the following 76-residue polypeptide: DNA-binding protein S1FA2 (76 aa).

The short motif at 50–55 (PPRKKK) is the Nuclear localization signal element. The segment covering 51-66 (PRKKKPLSKKKLKREK) has biased composition (basic residues). Residues 51-76 (PRKKKPLSKKKLKREKLKQGVPVPGE) are disordered.

This sequence belongs to the S1FA transcription factor family.

The protein resides in the nucleus. DNA-binding protein that specifically recognizes a negative element (S1F) within the RPS1 promoter. The protein is DNA-binding protein S1FA2 (S1FA2) of Arabidopsis thaliana (Mouse-ear cress).